The sequence spans 349 residues: MDNERQKALDTVIKNMEKSFGKGAVMKLGDNKGRRVSSTSSGSVTVDNALGVGGYPKGRIIEIYGPESSGKTTVALHAIAEVQKNGGVAAFIDAEHALDPVYAQALGVDIDNLYLSQPDHGEQGLEIAEAFVRSGAVDIVVVDSVAALTPKAEIEGEMGDTHVGLQARLMSQALRKLSGAISKSNTTAIFINQIREKVGVMFGNPETTPGGRALKFYSSVRLEVRRAEQLKQGQDIVGNRTKIKVVKNKVAPPFRVAEVDIMYGQGISKEGELIDLGVENDIVDKSGAWYSYNGDRMGQGKENVKNYLKENPQIKEEIDRKLREKLGIFDGDVDENENEDDSPKTLFDE.

An ATP-binding site is contributed by 65-72 (GPESSGKT). The disordered stretch occupies residues 329-349 (FDGDVDENENEDDSPKTLFDE). Acidic residues predominate over residues 331-340 (GDVDENENED).

The protein belongs to the RecA family.

It localises to the cytoplasm. In terms of biological role, can catalyze the hydrolysis of ATP in the presence of single-stranded DNA, the ATP-dependent uptake of single-stranded DNA by duplex DNA, and the ATP-dependent hybridization of homologous single-stranded DNAs. It interacts with LexA causing its activation and leading to its autocatalytic cleavage. The protein is Protein RecA of Staphylococcus epidermidis (strain ATCC 35984 / DSM 28319 / BCRC 17069 / CCUG 31568 / BM 3577 / RP62A).